Here is a 118-residue protein sequence, read N- to C-terminus: MARIAGINIPEHKHALIALTSIYGIGKKRSKIICFNANIAENSKISDLKEEEIELLRENVAKYVTEGDLRREKTLNIKRLIDLNCYRGLRHRRSLPVRGQRTKTNARTCKGPRKAIKK.

The interval V97–K118 is disordered.

Belongs to the universal ribosomal protein uS13 family. As to quaternary structure, part of the 30S ribosomal subunit. Forms a loose heterodimer with protein S19. Forms two bridges to the 50S subunit in the 70S ribosome.

Its function is as follows. Located at the top of the head of the 30S subunit, it contacts several helices of the 16S rRNA. In the 70S ribosome it contacts the 23S rRNA (bridge B1a) and protein L5 of the 50S subunit (bridge B1b), connecting the 2 subunits; these bridges are implicated in subunit movement. Contacts the tRNAs in the A and P-sites. In Buchnera aphidicola subsp. Schizaphis graminum (strain Sg), this protein is Small ribosomal subunit protein uS13.